The sequence spans 400 residues: MNKKTIRDVDWAGKRALVRVDFNVPLDDQGQITDDTRIRAALPTIRYLLEHGASVVLMSHLGRPKGKPNPKYSLRPVVERLFELLPEAKEVKKTEAITGPAAEAAVAMLKPGQVLVLENTRFDPREEPNDPAMAAELAKLGDVFVNDAFGTAHRANASTEGVAHYLPAVAGFLMEKELTYIGGALNNPQRPFVTVIGGAKISDKIGVIENLLGKVDALLIGGGMANTFLLAKGLNVGDSLVEPDSVPVAQQLMARAEERGARLLLPVDVVIADAFSADAQRQVVDVSDIPAGWRVLDIGPKTIERYSAEIRAARTVIWNGPMGVFELEPFAVGTRAIAQAMAEAAANGAITIVGGGDSVAAVEQAGLADKMSHVSTGGGASLELLEGRVLPGVAALQDAE.

Substrate-binding positions include 21–23, arginine 37, 60–63, arginine 121, and arginine 154; these read DFN and HLGR. ATP is bound by residues lysine 204, glutamate 326, and 355 to 358; that span reads GGDS.

This sequence belongs to the phosphoglycerate kinase family. As to quaternary structure, monomer.

It localises to the cytoplasm. The catalysed reaction is (2R)-3-phosphoglycerate + ATP = (2R)-3-phospho-glyceroyl phosphate + ADP. Its pathway is carbohydrate degradation; glycolysis; pyruvate from D-glyceraldehyde 3-phosphate: step 2/5. The polypeptide is Phosphoglycerate kinase (Chloroflexus aurantiacus (strain ATCC 29366 / DSM 635 / J-10-fl)).